Here is a 343-residue protein sequence, read N- to C-terminus: Succinylglutamate desuccinylase (343 aa).

Residues H60, E63, and H157 each contribute to the Zn(2+) site. E221 is a catalytic residue.

The protein belongs to the AspA/AstE family. Succinylglutamate desuccinylase subfamily. Requires Zn(2+) as cofactor.

The enzyme catalyses N-succinyl-L-glutamate + H2O = L-glutamate + succinate. The protein operates within amino-acid degradation; L-arginine degradation via AST pathway; L-glutamate and succinate from L-arginine: step 5/5. Its function is as follows. Transforms N(2)-succinylglutamate into succinate and glutamate. The polypeptide is Succinylglutamate desuccinylase (Idiomarina loihiensis (strain ATCC BAA-735 / DSM 15497 / L2-TR)).